A 120-amino-acid polypeptide reads, in one-letter code: Large ribosomal subunit protein uL18 (120 aa).

The protein belongs to the universal ribosomal protein uL18 family. In terms of assembly, part of the 50S ribosomal subunit; part of the 5S rRNA/L5/L18/L25 subcomplex. Contacts the 5S and 23S rRNAs.

This is one of the proteins that bind and probably mediate the attachment of the 5S RNA into the large ribosomal subunit, where it forms part of the central protuberance. This chain is Large ribosomal subunit protein uL18, found in Rhizobium meliloti (strain 1021) (Ensifer meliloti).